Consider the following 217-residue polypeptide: Large ribosomal subunit protein uL1 (217 aa).

K122 bears the N6,N6-dimethyllysine; alternate mark. Residue K122 is modified to N6-methyllysine; alternate.

It belongs to the universal ribosomal protein uL1 family.

This chain is Large ribosomal subunit protein uL1 (rpl10a), found in Dictyostelium discoideum (Social amoeba).